Reading from the N-terminus, the 159-residue chain is Cyclic pyranopterin monophosphate synthase (159 aa).

Substrate-binding positions include 75-77 (LCH) and 113-114 (ME). Asp128 is a catalytic residue.

It belongs to the MoaC family. In terms of assembly, homohexamer; trimer of dimers.

It carries out the reaction (8S)-3',8-cyclo-7,8-dihydroguanosine 5'-triphosphate = cyclic pyranopterin phosphate + diphosphate. It functions in the pathway cofactor biosynthesis; molybdopterin biosynthesis. Functionally, catalyzes the conversion of (8S)-3',8-cyclo-7,8-dihydroguanosine 5'-triphosphate to cyclic pyranopterin monophosphate (cPMP). The protein is Cyclic pyranopterin monophosphate synthase of Yersinia pseudotuberculosis serotype IB (strain PB1/+).